The sequence spans 703 residues: DnaJ homolog subfamily C member 14 (703 aa).

Over residues 1–11 (MAQKHPGERRL) the composition is skewed to basic and acidic residues. The tract at residues 1–229 (MAQKHPGERR…GRHRLARKRS (229 aa)) is disordered. Positions 17–28 (SGGTSLSTSGSS) are enriched in low complexity. Residues 75–84 (HGPPRGPGPP) are compositionally biased toward pro residues. The span at 91–102 (DESETGSEESGV) shows a compositional bias: acidic residues. Residues 121–133 (SFLSIPSACNCQG) are compositionally biased toward polar residues. Residues 163–176 (GEDEELEEEYDDEE) are compositionally biased toward acidic residues. Residues 193-202 (PLSRRQKHRF) show a composition bias toward basic residues. Residues 203–218 (LIKEDVRDSGRREPKA) are compositionally biased toward basic and acidic residues. Residues 219 to 228 (PGRHRLARKR) are compositionally biased toward basic residues. 2 helical membrane-spanning segments follow: residues 305–325 (MMFQ…IRIL) and 327–347 (VVGA…QLGW). Residues 444–508 (NPFHVLGVEA…ERRKEYEMKR (65 aa)) form the J domain. Disordered stretches follow at residues 622-643 (FGSR…PPAD) and 659-703 (MSNG…PFQR). Positions 673–684 (GTTSTSRPNSSV) are enriched in polar residues. Over residues 691 to 703 (PKRRKKVRRPFQR) the composition is skewed to basic residues.

In terms of assembly, interacts with the FxxxFxxxF motif of DRD1 via its C-terminal domain.

The protein localises to the endoplasmic reticulum membrane. Its function is as follows. Regulates the export of target proteins, such as DRD1, from the endoplasmic reticulum to the cell surface. The protein is DnaJ homolog subfamily C member 14 (Dnajc14) of Mus musculus (Mouse).